A 636-amino-acid chain; its full sequence is Leucine-rich repeat and fibronectin type-III domain-containing protein 4 (636 aa).

The signal sequence occupies residues 1 to 16 (MAPPLLLLLLASGAAA). The 32-residue stretch at 17 to 48 (CPLPCVCQNLSESLSTLCAHRGLLFVPPNVDR) folds into the LRRNT domain. The Extracellular segment spans residues 17–518 (CPLPCVCQNL…LQAHVLGGTL (502 aa)). N-linked (GlcNAc...) asparagine glycans are attached at residues asparagine 25 and asparagine 70. LRR repeat units lie at residues 49 to 70 (RTVELRLADNFIQALGPPDFRN), 73 to 94 (GLVDLTLSRNAITRIGARSFGD), 97 to 118 (SLRSLHLDGNRLVELGSSSLRG), 121 to 142 (NLQHLILSGNQLGRIAPGAFDD), 146 to 169 (SLEDLDVSYNNLRQVPWAGIGSMP), 170 to 191 (ALHTLNLDHNLIDALPPGVFAQ), and 194 to 215 (QLSRLDLTSNRLATLAPDPLFS). One can recognise an LRRCT domain in the interval 234–280 (NPLHCNCELLWLRRLARPDDLETCASPPTLAGRYFWAVPEGEFSCEP). The 87-residue stretch at 281-367 (PLIARHTQRL…GEATARVELR (87 aa)) folds into the Ig-like domain. Cysteine 302 and cysteine 351 are oxidised to a cystine. 4 N-linked (GlcNAc...) asparagine glycosylation sites follow: asparagine 324, asparagine 333, asparagine 376, and asparagine 440. The 98-residue stretch at 405 to 502 (SEPAVQVTEV…GCAHFSTLPA (98 aa)) folds into the Fibronectin type-III domain. The helical transmembrane segment at 519 to 539 (TVAVGGVLVAALLVFTVALLV) threads the bilayer. Over 540–636 (RGRGAGNGRL…SAERLEESVV (97 aa)) the chain is Cytoplasmic. A disordered region spans residues 556-585 (VQSQTNGGTSPMPKSHPPRSPPPRPQRSCS). Positions 569 to 580 (KSHPPRSPPPRP) are enriched in pro residues. Phosphoserine occurs at positions 585 and 627. A PDZ-binding motif is present at residues 633-636 (ESVV).

The protein belongs to the LRFN family. In terms of assembly, can form heteromeric complexes with LRFN1, LRFN2, LRFN3 and LRFN5. Unable to form homophilic interactions across cell junctions. Interacts with DLG1, DLG2 and DLG3. Also interacts with DLG4. In terms of processing, glycosylated. As to expression, expressed in brain and testis. In the brain, weak, but broad expression in the cerebral cortex and diencephalic nuclei. Also detected in other parts of the central nervous system, including the olfactory bulb, pons, cerebellum, and medulla oblongata, as well as in the peripheral nervous system, such as the ganglia of cranial nerves and the dorsal root ganglion during gestation.

The protein localises to the membrane. Its function is as follows. Promotes neurite outgrowth in hippocampal neurons. May play a role in redistributing DLG4 to the cell periphery. This is Leucine-rich repeat and fibronectin type-III domain-containing protein 4 (Lrfn4) from Mus musculus (Mouse).